Consider the following 307-residue polypeptide: Aspartate carbamoyltransferase catalytic subunit (307 aa).

Carbamoyl phosphate contacts are provided by arginine 58 and threonine 59. Residue lysine 86 coordinates L-aspartate. Positions 108, 136, and 139 each coordinate carbamoyl phosphate. Residues arginine 169 and arginine 223 each coordinate L-aspartate. Residues glycine 264 and proline 265 each contribute to the carbamoyl phosphate site.

It belongs to the aspartate/ornithine carbamoyltransferase superfamily. ATCase family. As to quaternary structure, heterododecamer (2C3:3R2) of six catalytic PyrB chains organized as two trimers (C3), and six regulatory PyrI chains organized as three dimers (R2).

The enzyme catalyses carbamoyl phosphate + L-aspartate = N-carbamoyl-L-aspartate + phosphate + H(+). The protein operates within pyrimidine metabolism; UMP biosynthesis via de novo pathway; (S)-dihydroorotate from bicarbonate: step 2/3. Its function is as follows. Catalyzes the condensation of carbamoyl phosphate and aspartate to form carbamoyl aspartate and inorganic phosphate, the committed step in the de novo pyrimidine nucleotide biosynthesis pathway. The protein is Aspartate carbamoyltransferase catalytic subunit of Syntrophus aciditrophicus (strain SB).